We begin with the raw amino-acid sequence, 424 residues long: Histidine--tRNA ligase (424 aa).

It belongs to the class-II aminoacyl-tRNA synthetase family. Homodimer.

The protein resides in the cytoplasm. It carries out the reaction tRNA(His) + L-histidine + ATP = L-histidyl-tRNA(His) + AMP + diphosphate + H(+). The sequence is that of Histidine--tRNA ligase from Thioalkalivibrio sulfidiphilus (strain HL-EbGR7).